Reading from the N-terminus, the 212-residue chain is Glycerol-3-phosphate acyltransferase (212 aa).

6 helical membrane passes run 8-28 (IFLSAALIALAYLIGSIPFAV), 59-79 (AAAALTLLGDAFKGWFALWLA), 90-110 (VFALVALAAFLGHLYPVFLGF), 122-142 (ILLAIHPGLALATAATWVIIA), 148-168 (SSLAALVAAFFAPVYYLFGSG), and 169-189 (VAWYAQGPVGVALAIITLLLF).

Belongs to the PlsY family. As to quaternary structure, probably interacts with PlsX.

It is found in the cell inner membrane. The enzyme catalyses an acyl phosphate + sn-glycerol 3-phosphate = a 1-acyl-sn-glycero-3-phosphate + phosphate. The protein operates within lipid metabolism; phospholipid metabolism. Functionally, catalyzes the transfer of an acyl group from acyl-phosphate (acyl-PO(4)) to glycerol-3-phosphate (G3P) to form lysophosphatidic acid (LPA). This enzyme utilizes acyl-phosphate as fatty acyl donor, but not acyl-CoA or acyl-ACP. The polypeptide is Glycerol-3-phosphate acyltransferase (Bordetella petrii (strain ATCC BAA-461 / DSM 12804 / CCUG 43448)).